Here is a 240-residue protein sequence, read N- to C-terminus: MINAEPIISKMKNQKINYDKVLKKLIGQWEREAIRPKILLHSCCAPCSTYTLEFLTQYADIAIYFANSNIHPKNEYLRRAKVQEQFVEDFNRKTGANVKYIEAPYEPHKFVKMVKDKELADEKEGGLRCTACFEMRLDIVAKAAVEHGYDYFGSAITLSPKKNAQLINELGMDVQKIYDVNYLPSDFKKSKGYERSIEMCNDYNIFRQCYCGCVFAAMQQGIDFKTVNKEAKAFLEQYPD.

Residues Cys43, Cys44, Cys129, and Cys132 each coordinate [4Fe-4S] cluster. Cys211 and Cys213 form a disulfide bridge.

It belongs to the QueH family.

It carries out the reaction epoxyqueuosine(34) in tRNA + AH2 = queuosine(34) in tRNA + A + H2O. It participates in tRNA modification; tRNA-queuosine biosynthesis. Its function is as follows. Catalyzes the conversion of epoxyqueuosine (oQ) to queuosine (Q), which is a hypermodified base found in the wobble positions of tRNA(Asp), tRNA(Asn), tRNA(His) and tRNA(Tyr). The polypeptide is Epoxyqueuosine reductase QueH (Staphylococcus aureus (strain Mu50 / ATCC 700699)).